The chain runs to 143 residues: Large ribosomal subunit protein uL11 (143 aa).

It belongs to the universal ribosomal protein uL11 family. As to quaternary structure, part of the ribosomal stalk of the 50S ribosomal subunit. Interacts with L10 and the large rRNA to form the base of the stalk. L10 forms an elongated spine to which L12 dimers bind in a sequential fashion forming a multimeric L10(L12)X complex. Post-translationally, one or more lysine residues are methylated.

Forms part of the ribosomal stalk which helps the ribosome interact with GTP-bound translation factors. The sequence is that of Large ribosomal subunit protein uL11 from Caulobacter sp. (strain K31).